We begin with the raw amino-acid sequence, 132 residues long: Fatty acid-binding protein, adipocyte (132 aa).

Cys-2 bears the N-acetylcysteine mark. Ser-13 carries the post-translational modification Phosphoserine. Tyr-20 is subject to Phosphotyrosine; by Tyr-kinases. The Nuclear localization signal signature appears at 22–32 (KEVGVGFATRK). 127–129 (RVY) provides a ligand contact to a fatty acid.

Belongs to the calycin superfamily. Fatty-acid binding protein (FABP) family. As to quaternary structure, monomer. Homodimer. Interacts with PPARG.

It localises to the cytoplasm. The protein localises to the nucleus. Functionally, lipid transport protein in adipocytes. Binds both long chain fatty acids and retinoic acid. Delivers long-chain fatty acids and retinoic acid to their cognate receptors in the nucleus. The protein is Fatty acid-binding protein, adipocyte (Fabp4) of Mus musculus (Mouse).